The following is a 74-amino-acid chain: Insertion element IS986 uncharacterized 8.2 kDa protein (74 aa).

In Mycobacterium tuberculosis, this protein is Insertion element IS986 uncharacterized 8.2 kDa protein.